The following is a 206-amino-acid chain: Small ribosomal subunit protein uS4 (206 aa).

Residues 96-156 (TRLDNVVYRM…EKSKTQARII (61 aa)) form the S4 RNA-binding domain.

This sequence belongs to the universal ribosomal protein uS4 family. In terms of assembly, part of the 30S ribosomal subunit. Contacts protein S5. The interaction surface between S4 and S5 is involved in control of translational fidelity.

One of the primary rRNA binding proteins, it binds directly to 16S rRNA where it nucleates assembly of the body of the 30S subunit. In terms of biological role, with S5 and S12 plays an important role in translational accuracy. The polypeptide is Small ribosomal subunit protein uS4 (Colwellia psychrerythraea (strain 34H / ATCC BAA-681) (Vibrio psychroerythus)).